The chain runs to 392 residues: Stilbene synthase 1 (392 aa).

A substrate-binding site is contributed by 55–58 (KFNR). The active site involves Cys-164. Residues Leu-267 and 305 to 307 (GGP) each bind substrate.

This sequence belongs to the thiolase-like superfamily. Chalcone/stilbene synthases family. As to quaternary structure, homodimer. In terms of tissue distribution, in leaves, expressed in palisade and spongy parenchyma cells and, to a lesser extent, in epidermal cells after induction.

The protein localises to the cytoplasm. It carries out the reaction 4-coumaroyl-CoA + 3 malonyl-CoA + 3 H(+) = trans-resveratrol + 4 CO2 + 4 CoA. It participates in phytoalexin biosynthesis; 3,4',5-trihydroxystilbene biosynthesis; 3,4',5-trihydroxystilbene from trans-4-coumarate: step 2/2. Its function is as follows. Mediates resistance to pathogens which are sensitive to stilbenes such as Botrytis cinerea, Eutypa lata and Plasmopora viticola by enhancing the production of phytoalexins. Confers resistance to Phytophthora palmivora when expressed in papaya. The protein is Stilbene synthase 1 (VINST1) of Vitis vinifera (Grape).